Reading from the N-terminus, the 642-residue chain is MKKLPFLIIIIYIFLILISISSSIDYNYNNDIDNNNNNIINRNKNKNKNNLYNNKVIIKNDDNDDEINNKFKIRLDDNEDQDIYNEYHFLSKVHNRLAFNIFGSSSENSGSGSNSNSNSKNTDSSTGPTPSPISINGTLNSTATVYWSGGKSSCKSVNCTEEGFSTGDSYACSYEITPTYQRGQWEKGVKYFKDPLPKSILTSQVVGVSFVINGVVGCTPLKQELTTIEFLIQDVQVGQTISTNRSDDCSCGICYKDYEILPQSYDLLGYNKSGLNKVQLLLLDNSICATSLDIIFYYHPSTIPPTPTPTPSKPTISLLKKYLIIGFSIVGGLLIIGGCFLLIRNRYRSSGYYKPDKNDYTQIKDGKDIDIHQIKIGVRIGKGNYGEVYLGTWRGSQVAVKKLPAHNINENILKEFHREINLMKNLRHPNVIQFLGSCLIPPDICICTEYMPRGSLYSILHDQALQLQWSLLIKMMIDAAKGVIYLHNSTPVILHRDLKSHNLLVDENWKVKVADFGLSTIEQQGATMTACGTPCWTSPEVLRSQRYTEKADVYSFGIILWECATRQDPYFGIPPFQVIFAVGREGMRPPVPQNGPPKYIQLLIDCLNENPSHRPTMEQCLERLESIDSSGYSDLQYVRQQL.

Residues 1-23 (MKKLPFLIIIIYIFLILISISSS) form the signal peptide. Residues 24–322 (IDYNYNNDID…KPTISLLKKY (299 aa)) are Extracellular-facing. The segment covering 106 to 128 (SENSGSGSNSNSNSKNTDSSTGP) has biased composition (low complexity). The segment at 106 to 136 (SENSGSGSNSNSNSKNTDSSTGPTPSPISIN) is disordered. N-linked (GlcNAc...) asparagine glycans are attached at residues N136, N140, N158, N244, and N271. A helical membrane pass occupies residues 323-343 (LIIGFSIVGGLLIIGGCFLLI). The Cytoplasmic portion of the chain corresponds to 344-642 (RNRYRSSGYY…SDLQYVRQQL (299 aa)). One can recognise a Protein kinase domain in the interval 374-627 (IKIGVRIGKG…EQCLERLESI (254 aa)). Residues 380 to 388 (IGKGNYGEV) and K401 each bind ATP. D497 (proton acceptor) is an active-site residue.

It belongs to the protein kinase superfamily. TKL Ser/Thr protein kinase family.

It localises to the membrane. It carries out the reaction L-seryl-[protein] + ATP = O-phospho-L-seryl-[protein] + ADP + H(+). It catalyses the reaction L-threonyl-[protein] + ATP = O-phospho-L-threonyl-[protein] + ADP + H(+). This chain is Probable serine/threonine-protein kinase drkA (drkA), found in Dictyostelium discoideum (Social amoeba).